Consider the following 426-residue polypeptide: Phosphomethylpyrimidine synthase (426 aa).

Residues Asn-65, Met-94, Tyr-123, His-162, 184–186, 225–228, and Glu-264 each bind substrate; these read SRG and DGMR. Position 268 (His-268) interacts with Zn(2+). A substrate-binding site is contributed by Tyr-291. Zn(2+) is bound at residue His-332. [4Fe-4S] cluster-binding residues include Cys-408, Cys-411, and Cys-415.

Belongs to the ThiC family. [4Fe-4S] cluster is required as a cofactor.

It catalyses the reaction 5-amino-1-(5-phospho-beta-D-ribosyl)imidazole + S-adenosyl-L-methionine = 4-amino-2-methyl-5-(phosphooxymethyl)pyrimidine + CO + 5'-deoxyadenosine + formate + L-methionine + 3 H(+). Its pathway is cofactor biosynthesis; thiamine diphosphate biosynthesis. Catalyzes the synthesis of the hydroxymethylpyrimidine phosphate (HMP-P) moiety of thiamine from aminoimidazole ribotide (AIR) in a radical S-adenosyl-L-methionine (SAM)-dependent reaction. This chain is Phosphomethylpyrimidine synthase, found in Methanocaldococcus jannaschii (strain ATCC 43067 / DSM 2661 / JAL-1 / JCM 10045 / NBRC 100440) (Methanococcus jannaschii).